A 191-amino-acid chain; its full sequence is Ribosomal RNA small subunit methyltransferase G (191 aa).

S-adenosyl-L-methionine-binding positions include Gly62, Phe67, 111–112 (IE), and Arg124.

Belongs to the methyltransferase superfamily. RNA methyltransferase RsmG family.

The protein localises to the cytoplasm. The enzyme catalyses guanosine(527) in 16S rRNA + S-adenosyl-L-methionine = N(7)-methylguanosine(527) in 16S rRNA + S-adenosyl-L-homocysteine. In terms of biological role, specifically methylates the N7 position of guanine in position 527 of 16S rRNA. In Rickettsia prowazekii (strain Madrid E), this protein is Ribosomal RNA small subunit methyltransferase G.